The sequence spans 520 residues: Cell adhesion molecule CEACAM2 (520 aa).

Residues M1–A34 form the signal peptide. The region spanning Q35–H141 is the Ig-like V-type domain. Residues Q35 to D422 lie on the Extracellular side of the membrane. N87, N104, N148, N152, N175, N199, N206, N210, N226, N258, N290, N294, N304, N317, N333, and N361 each carry an N-linked (GlcNAc...) asparagine glycan. 3 consecutive Ig-like C2-type domains span residues L145–N234, P239–T319, and P327–E411. A disulfide bridge connects residues C167 and C217. Cysteines 261 and 301 form a disulfide. A disulfide bond links C346 and C394. A helical transmembrane segment spans residues V423–A443. Residues Y444–K520 are Cytoplasmic-facing. The segment at Q457–K520 is disordered. Positions S466–N480 are enriched in polar residues. Y487 is modified (phosphotyrosine). A compositionally biased stretch (polar residues) spans L490–V513. S502 is modified (phosphoserine). The residue at position 514 (Y514) is a Phosphotyrosine.

It belongs to the immunoglobulin superfamily. CEA family. In terms of assembly, interacts weakly with MHV spike protein in tissue culture. Isoform 2 is detected in elongating spermatids within the seminiferous epithelium (at protein level). Expressed in kidney, colon, uterus, gut mononuclear cells, crypt epithelia of intestinal tissues, and to a lesser extent, in spleen. Expressed in brain including VMH, globus pallidus, ventral pallidum, striatum, olfactory bulb and hippocampus. Also detected in rectal carcinoma cell line CMT93. Isoform 2 and isoform 3 are expressed in testis. Isoform 2 is detected in seminiferous tubule, not detected in epididymal spermatozoa. Also not observed on spermatogonia, spermatocytes, round spermatids or somatic Sertoli cells. During stages I-VII of spermatogenesis, detected on the elongating spermatids. At spermiation (stage VIII) and subsequent stages IX-XII, levels are drastically reduced or absent in the seminiferous tubules. Sometimes weakly detected in the apical region of stage-VIII seminiferous epithelium. Isoform 2 level is very low in stomach, kidney, intestine, liver and spleen.

The protein resides in the cell membrane. In terms of biological role, controls energy balance and peripheral insulin action. Involved in the regulation of feeding behavior particularly in the ventromedial nucleus of hypothalamus (VMH) regulation of food intake. Has a role in the regulation of metabolic rate and insulin sensitivity or resistance via effects on brown adipogenesis, sympathetic nervous outflow to brown adipose tissue, spontaneous activity and energy expenditure in skeletal muscle. In case of murine coronavirus (MHV) infection, does probably not serve as functional receptor for the virus. Functionally, isoform 2 may be an adhesion molecule contributing to cell to cell adhesion between elongating spermatids and Sertoli cells within the seminiferous epithelium. In Mus musculus (Mouse), this protein is Cell adhesion molecule CEACAM2.